The sequence spans 204 residues: Methylthioribulose-1-phosphate dehydratase (204 aa).

Residues histidine 94 and histidine 96 each coordinate Zn(2+).

Belongs to the aldolase class II family. MtnB subfamily. It depends on Zn(2+) as a cofactor.

The enzyme catalyses 5-(methylsulfanyl)-D-ribulose 1-phosphate = 5-methylsulfanyl-2,3-dioxopentyl phosphate + H2O. It participates in amino-acid biosynthesis; L-methionine biosynthesis via salvage pathway; L-methionine from S-methyl-5-thio-alpha-D-ribose 1-phosphate: step 2/6. In terms of biological role, catalyzes the dehydration of methylthioribulose-1-phosphate (MTRu-1-P) into 2,3-diketo-5-methylthiopentyl-1-phosphate (DK-MTP-1-P). In Enterobacter sp. (strain 638), this protein is Methylthioribulose-1-phosphate dehydratase.